Consider the following 246-residue polypeptide: MEEAASQSLEEDFEGQATHTGPKGVINDWRKFKLESEDGDSIPPSKKEILRQMSSPQSRDDKDSKERMSRKMSIQEYELIHQDKEDEGCLRKYRRQCMQDMHQKLSFGPRYGFVYELETGEQFLETIEKEQKVTTIVVNIYEDGVRGCDALNSSLECLAAEYPMVKFCKIRASNTGAGDRFSSDVLPTLLVYKGGELISNFISVAEQFAEDFFAADVESFLNEYGLLPEREIHDLGQTNTEDEDIE.

Residues 1–14 (MEEAASQSLEEDFE) show a composition bias toward acidic residues. Residues 1-70 (MEEAASQSLE…DKDSKERMSR (70 aa)) are disordered. The region spanning 1–246 (MEEAASQSLE…QTNTEDEDIE (246 aa)) is the Phosducin domain. A compositionally biased stretch (basic and acidic residues) spans 58 to 69 (SRDDKDSKERMS). Position 73 is a phosphoserine; by PKA (Ser73). The thioredoxin fold stretch occupies residues 111-246 (YGFVYELETG…QTNTEDEDIE (136 aa)).

It belongs to the phosducin family. As to quaternary structure, interacts with CRX. Forms a complex with the beta and gamma subunits of the GTP-binding protein, transducin. Light-induced changes in cyclic nucleotide levels modulate the phosphorylation of this protein by cAMP kinase.

The protein localises to the cytoplasm. Its subcellular location is the cytosol. It is found in the nucleus. It localises to the cell projection. The protein resides in the cilium. The protein localises to the photoreceptor outer segment. Its subcellular location is the photoreceptor inner segment. Its function is as follows. Inhibits the transcriptional activation activity of the cone-rod homeobox CRX. May participate in the regulation of visual phototransduction or in the integration of photoreceptor metabolism. This chain is Phosducin (Pdc), found in Rattus norvegicus (Rat).